The sequence spans 544 residues: Prolyl 4-hydroxylase subunit alpha-3 (544 aa).

A signal peptide spans 1–19 (MGPAARLAALLAVLAFRAG). The stretch at 107–131 (LEASENIRALKDGYERVEQDLPAFE) forms a coiled coil. One copy of the TPR repeat lies at 227–260 (EDALDHLAFAYFQAGNVLCALNLSREFLLYSPDN). A glycan (N-linked (GlcNAc...) asparagine) is linked at Asn-248. The 108-residue stretch at 422–529 (YAEYLQVVNY…KWVANKWIHE (108 aa)) folds into the Fe2OG dioxygenase domain. Residues His-440 and Asp-442 each contribute to the Fe cation site. N-linked (GlcNAc...) asparagine glycosylation is present at Asn-482. A Fe cation-binding site is contributed by His-510. Lys-520 is a 2-oxoglutarate binding site.

Belongs to the P4HA family. Heterotetramer of two alpha-3 chains and two beta chains (the beta chain is the multi-functional PDI). The cofactor is Fe(2+). It depends on L-ascorbate as a cofactor. Post-translationally, N-glycosylation plays no role in the catalytic activity.

It localises to the endoplasmic reticulum lumen. It catalyses the reaction L-prolyl-[collagen] + 2-oxoglutarate + O2 = trans-4-hydroxy-L-prolyl-[collagen] + succinate + CO2. In terms of biological role, catalyzes the post-translational formation of 4-hydroxyproline in -Xaa-Pro-Gly- sequences in collagens and other proteins. The chain is Prolyl 4-hydroxylase subunit alpha-3 (P4HA3) from Bos taurus (Bovine).